The following is a 203-amino-acid chain: Glycerol-3-phosphate acyltransferase (203 aa).

Transmembrane regions (helical) follow at residues Asn-3–Ala-23, Ile-61–Leu-81, Val-87–Phe-107, Gly-118–Val-138, Ile-144–His-164, and Thr-172–Val-192.

It belongs to the PlsY family. As to quaternary structure, probably interacts with PlsX.

Its subcellular location is the cell inner membrane. It catalyses the reaction an acyl phosphate + sn-glycerol 3-phosphate = a 1-acyl-sn-glycero-3-phosphate + phosphate. Its pathway is lipid metabolism; phospholipid metabolism. Catalyzes the transfer of an acyl group from acyl-phosphate (acyl-PO(4)) to glycerol-3-phosphate (G3P) to form lysophosphatidic acid (LPA). This enzyme utilizes acyl-phosphate as fatty acyl donor, but not acyl-CoA or acyl-ACP. In Campylobacter concisus (strain 13826), this protein is Glycerol-3-phosphate acyltransferase.